A 1866-amino-acid polypeptide reads, in one-letter code: Nucleoporin Nup188 (1866 aa).

This sequence belongs to the Nup188 family. As to quaternary structure, part of the nuclear pore complex (NPC).

The protein resides in the nucleus. Its subcellular location is the nuclear pore complex. Functionally, component of the nuclear pore complex (NPC), a complex required for the trafficking across the nuclear envelope. Required for proper protein transport into the nucleus. This Drosophila melanogaster (Fruit fly) protein is Nucleoporin Nup188.